A 945-amino-acid chain; its full sequence is Bifunctional glutamine synthetase adenylyltransferase/adenylyl-removing enzyme (945 aa).

The segment at 1–441 (MLPLSAALQT…VFNDLIGDDS (441 aa)) is adenylyl removase. Positions 450 to 945 (YQHYHSLWQD…VRASWAKWLG (496 aa)) are adenylyl transferase.

Belongs to the GlnE family. Requires Mg(2+) as cofactor.

The catalysed reaction is [glutamine synthetase]-O(4)-(5'-adenylyl)-L-tyrosine + phosphate = [glutamine synthetase]-L-tyrosine + ADP. It carries out the reaction [glutamine synthetase]-L-tyrosine + ATP = [glutamine synthetase]-O(4)-(5'-adenylyl)-L-tyrosine + diphosphate. In terms of biological role, involved in the regulation of glutamine synthetase GlnA, a key enzyme in the process to assimilate ammonia. When cellular nitrogen levels are high, the C-terminal adenylyl transferase (AT) inactivates GlnA by covalent transfer of an adenylyl group from ATP to specific tyrosine residue of GlnA, thus reducing its activity. Conversely, when nitrogen levels are low, the N-terminal adenylyl removase (AR) activates GlnA by removing the adenylyl group by phosphorolysis, increasing its activity. The regulatory region of GlnE binds the signal transduction protein PII (GlnB) which indicates the nitrogen status of the cell. This is Bifunctional glutamine synthetase adenylyltransferase/adenylyl-removing enzyme from Serratia proteamaculans (strain 568).